The following is a 493-amino-acid chain: NADH-quinone oxidoreductase subunit N 2 (493 aa).

14 consecutive transmembrane segments (helical) span residues 16 to 36, 45 to 65, 87 to 107, 119 to 139, 141 to 161, 176 to 196, 219 to 239, 258 to 278, 285 to 305, 313 to 333, 340 to 360, 385 to 405, 421 to 441, and 464 to 484; these read IIPAVMLALFGCAILLFDFLI, FLLIFVVLAEAFTGFGLFRQQ, GFAIFFNWIFLVAAVVVAIVS, GEYYSLILFAQCGMYFLATGT, LITLFIGLELMALCFYVMVGF, LLLGAFSSGFLVYGFSVMYGI, VFLALSTTSVGLLFKVSAVPF, LSVASKAASIAFLLRIFLGPL, WEPLLAFIAIITLTIGNLAAI, LLAYSSISHAGYMLLGLVAGN, IAVYVMVYTFMNLGAFLVIIA, AFLMLIFLLSLAGIPPTAGFL, GLAIVATLYVAVAIYYYFKIV, and CALALTGIATLAIGIYPEPFL.

The protein belongs to the complex I subunit 2 family. In terms of assembly, NDH-1 is composed of 14 different subunits. Subunits NuoA, H, J, K, L, M, N constitute the membrane sector of the complex.

It localises to the cell inner membrane. The catalysed reaction is a quinone + NADH + 5 H(+)(in) = a quinol + NAD(+) + 4 H(+)(out). In terms of biological role, NDH-1 shuttles electrons from NADH, via FMN and iron-sulfur (Fe-S) centers, to quinones in the respiratory chain. The immediate electron acceptor for the enzyme in this species is believed to be ubiquinone. Couples the redox reaction to proton translocation (for every two electrons transferred, four hydrogen ions are translocated across the cytoplasmic membrane), and thus conserves the redox energy in a proton gradient. In Solibacter usitatus (strain Ellin6076), this protein is NADH-quinone oxidoreductase subunit N 2.